We begin with the raw amino-acid sequence, 212 residues long: Phosphatidylserine decarboxylase proenzyme (212 aa).

Ser182 serves as the catalytic Schiff-base intermediate with substrate; via pyruvic acid. Position 182 is a pyruvic acid (Ser); by autocatalysis (Ser182).

The protein belongs to the phosphatidylserine decarboxylase family. PSD-A subfamily. In terms of assembly, heterodimer of a large membrane-associated beta subunit and a small pyruvoyl-containing alpha subunit. Pyruvate serves as cofactor. Is synthesized initially as an inactive proenzyme. Formation of the active enzyme involves a self-maturation process in which the active site pyruvoyl group is generated from an internal serine residue via an autocatalytic post-translational modification. Two non-identical subunits are generated from the proenzyme in this reaction, and the pyruvate is formed at the N-terminus of the alpha chain, which is derived from the carboxyl end of the proenzyme. The post-translation cleavage follows an unusual pathway, termed non-hydrolytic serinolysis, in which the side chain hydroxyl group of the serine supplies its oxygen atom to form the C-terminus of the beta chain, while the remainder of the serine residue undergoes an oxidative deamination to produce ammonia and the pyruvoyl prosthetic group on the alpha chain.

It localises to the cell membrane. The catalysed reaction is a 1,2-diacyl-sn-glycero-3-phospho-L-serine + H(+) = a 1,2-diacyl-sn-glycero-3-phosphoethanolamine + CO2. It functions in the pathway phospholipid metabolism; phosphatidylethanolamine biosynthesis; phosphatidylethanolamine from CDP-diacylglycerol: step 2/2. In terms of biological role, catalyzes the formation of phosphatidylethanolamine (PtdEtn) from phosphatidylserine (PtdSer). In Paraburkholderia phytofirmans (strain DSM 17436 / LMG 22146 / PsJN) (Burkholderia phytofirmans), this protein is Phosphatidylserine decarboxylase proenzyme.